We begin with the raw amino-acid sequence, 315 residues long: Bifunctional protein FolD (315 aa).

NADP(+) is bound by residues 166–168 (GRS), Ser193, and Ile234.

This sequence belongs to the tetrahydrofolate dehydrogenase/cyclohydrolase family. As to quaternary structure, homodimer.

The enzyme catalyses (6R)-5,10-methylene-5,6,7,8-tetrahydrofolate + NADP(+) = (6R)-5,10-methenyltetrahydrofolate + NADPH. It catalyses the reaction (6R)-5,10-methenyltetrahydrofolate + H2O = (6R)-10-formyltetrahydrofolate + H(+). Its pathway is one-carbon metabolism; tetrahydrofolate interconversion. In terms of biological role, catalyzes the oxidation of 5,10-methylenetetrahydrofolate to 5,10-methenyltetrahydrofolate and then the hydrolysis of 5,10-methenyltetrahydrofolate to 10-formyltetrahydrofolate. This Treponema pallidum (strain Nichols) protein is Bifunctional protein FolD.